The primary structure comprises 386 residues: ABC transporter permease protein NatB (386 aa).

6 helical membrane passes run 19–39, 172–192, 226–246, 273–293, 300–320, and 353–373; these read TILL…FFYE, AIML…SGAM, WLAV…FLIL, ALII…ISIM, AQSY…FIFS, and ATIL…FLLA.

The complex is composed of NatA and NatB.

It is found in the cell membrane. The enzyme catalyses Na(+)(in) + ATP + H2O = Na(+)(out) + ADP + phosphate + H(+). Functionally, part of an ABC transporter that catalyzes ATP-dependent electrogenic sodium extrusion. The polypeptide is ABC transporter permease protein NatB (Bacillus subtilis (strain 168)).